We begin with the raw amino-acid sequence, 357 residues long: MKASIYDFTLDELSQLLKPSFRAKQLYLWLYAKYKTSFKDMQNNFSKDFIAYLEREFTLRTIEITHVRKSVDGSKKYLFKSLRDNHTFEAVLLKMKDKKIDEKTNAILEGEKYTVCVSCQIGCQVGCSFCFTQKGGFVRNLKASEIIQQALLIKEDNNLPIEKALNIVFMGMGEPLNNLDEVCKAIEIFNTGMQISPRRITVSTSGVADKIPILAGKNLGVQLAISLHAVDDKTRSSLMPLNKKYNIECVLNEVRKWPLEQRKRVMFEYLLIKDLNDSLDCAKKLLKLLNGIKSKVNLILFNPHEGSKFERPSLESARMFADFLNSKGLLCTIRESKALDIEAACGQLREKKLSQQI.

Glutamate 89 functions as the Proton acceptor in the catalytic mechanism. A Radical SAM core domain is found at 109–340 (EGEKYTVCVS…CTIRESKALD (232 aa)). A disulfide bridge links cysteine 116 with cysteine 345. [4Fe-4S] cluster is bound by residues cysteine 123, cysteine 127, and cysteine 130. S-adenosyl-L-methionine contacts are provided by residues 173–174 (GE), serine 203, 226–228 (SLH), and asparagine 302. Residue cysteine 345 is the S-methylcysteine intermediate of the active site.

It belongs to the radical SAM superfamily. RlmN family. It depends on [4Fe-4S] cluster as a cofactor.

It is found in the cytoplasm. It catalyses the reaction adenosine(2503) in 23S rRNA + 2 reduced [2Fe-2S]-[ferredoxin] + 2 S-adenosyl-L-methionine = 2-methyladenosine(2503) in 23S rRNA + 5'-deoxyadenosine + L-methionine + 2 oxidized [2Fe-2S]-[ferredoxin] + S-adenosyl-L-homocysteine. It carries out the reaction adenosine(37) in tRNA + 2 reduced [2Fe-2S]-[ferredoxin] + 2 S-adenosyl-L-methionine = 2-methyladenosine(37) in tRNA + 5'-deoxyadenosine + L-methionine + 2 oxidized [2Fe-2S]-[ferredoxin] + S-adenosyl-L-homocysteine. Its function is as follows. Specifically methylates position 2 of adenine 2503 in 23S rRNA and position 2 of adenine 37 in tRNAs. m2A2503 modification seems to play a crucial role in the proofreading step occurring at the peptidyl transferase center and thus would serve to optimize ribosomal fidelity. The sequence is that of Dual-specificity RNA methyltransferase RlmN from Helicobacter pylori (strain HPAG1).